The chain runs to 632 residues: MEHIITPKVENVKLLNRYTEKKSALGTLYLTATHLIYVEQTSNTRKETWVLHHHILSVEKLLLTASGCPLLIRCKTFQHLHLLFQKERDCQDVYQSLLRLFQPVKEEELYAFLYNPHQNEEERRRGWELISVVNDFNRMGLSNDYWEISHINKNFEMCSTYPSILGLPKSASVATVTGSAKFRSRGRLPVLSYYHKDTKAAICRCSQPLSGLNSRCVEDEQMLQAISQANPNSPFIYVVDTRPKLNAMANRAAGKGYENEDNYSNIRFQFQGIENIHVMRSSLQKLLEVCSMKSPSMSDYLTGLENSGWLRHIKSVMDAGVFLAKAVCEERASVLVHCSDGWDRTAQVCSLACLLLDPYYRTIKGLMVLIEKEWISFGHKFSHRCGHLDSDPKEASPVFTQFLECVWQLSQQFPCVFEFNEHYLIEIHDQVYACQYGNFIGNCQKERLDMRLHEKTFSLWPHLLENQHQYRNPLYRRSLESTVLRPSTLPLHFKFWCGMYNHYDRGMHPKQSVLDTLLTLTQRQVEGERTMTELQRQLAVADGVLPDPAGPINTHADQNNQSEKMPAPPVVQSNGSCAPLINGNVKEVGPGAENSNQEDREEPAANEHDLSSKDKPVFVETEHSKEEVQESS.

A Myotubularin phosphatase domain is found at 126–500 (GWELISVVND…LHFKFWCGMY (375 aa)). Positions 250, 275, and 276 each coordinate a 1,2-diacyl-sn-glycero-3-phospho-(1D-myo-inositol-3,5-bisphosphate). 3 residues coordinate a 1,2-diacyl-sn-glycero-3-phospho-(1D-myo-inositol-3-phosphate): Asn250, Asn275, and Ile276. The active-site Phosphocysteine intermediate is the Cys338. Positions 339, 340, 341, 342, 343, 344, 380, and 384 each coordinate a 1,2-diacyl-sn-glycero-3-phospho-(1D-myo-inositol-3,5-bisphosphate). A 1,2-diacyl-sn-glycero-3-phospho-(1D-myo-inositol-3-phosphate)-binding residues include Ser339, Asp340, Gly341, Trp342, Asp343, and Arg344. Phosphate-binding residues include Ser339 and Asp340. The phosphate site is built by Trp342, Asp343, and Arg344. A 1,2-diacyl-sn-glycero-3-phospho-(1D-myo-inositol-3-phosphate) is bound at residue Arg384. The tract at residues 545 to 632 (LPDPAGPINT…HSKEEVQESS (88 aa)) is disordered. Residues 602-632 (EPAANEHDLSSKDKPVFVETEHSKEEVQESS) are compositionally biased toward basic and acidic residues.

Belongs to the protein-tyrosine phosphatase family. Non-receptor class myotubularin subfamily. As to quaternary structure, homodimer.

The protein localises to the nucleus envelope. The catalysed reaction is a 1,2-diacyl-sn-glycero-3-phospho-(1D-myo-inositol-3,5-bisphosphate) + H2O = a 1,2-diacyl-sn-glycero-3-phospho-(1D-myo-inositol-5-phosphate) + phosphate. The enzyme catalyses a 1,2-diacyl-sn-glycero-3-phospho-(1D-myo-inositol-3-phosphate) + H2O = a 1,2-diacyl-sn-glycero-3-phospho-(1D-myo-inositol) + phosphate. It carries out the reaction 1,2-dioctanoyl-sn-glycero-3-phospho-(1D-myo-inositol-3,5-bisphosphate) + H2O = 1,2-dioctanoyl-sn-glycero-3-phospho-(1D-myo-inositol-5-phosphate) + phosphate. Lipid phosphatase that specifically dephosphorylates the D-3 position of phosphatidylinositol 3-phosphate and phosphatidylinositol 3,5-bisphosphate, generating phosphatidylinositol and phosphatidylinositol 5-phosphate. The polypeptide is Phosphatidylinositol-3,5-bisphosphate 3-phosphatase MTMR8 (mtmr8) (Danio rerio (Zebrafish)).